Here is a 270-residue protein sequence, read N- to C-terminus: Tryptophan synthase alpha chain (270 aa).

Residues E50 and D61 each act as proton acceptor in the active site.

The protein belongs to the TrpA family. In terms of assembly, tetramer of two alpha and two beta chains.

It catalyses the reaction (1S,2R)-1-C-(indol-3-yl)glycerol 3-phosphate + L-serine = D-glyceraldehyde 3-phosphate + L-tryptophan + H2O. The protein operates within amino-acid biosynthesis; L-tryptophan biosynthesis; L-tryptophan from chorismate: step 5/5. Functionally, the alpha subunit is responsible for the aldol cleavage of indoleglycerol phosphate to indole and glyceraldehyde 3-phosphate. The sequence is that of Tryptophan synthase alpha chain from Chlorobium luteolum (strain DSM 273 / BCRC 81028 / 2530) (Pelodictyon luteolum).